We begin with the raw amino-acid sequence, 391 residues long: E3 ubiquitin-protein ligase RMND5A (391 aa).

Met-1 is modified (N-acetylmethionine). A LisH domain is found at 114 to 146 (SQRLLNEVMVEHFFRQGMLDVAEELCQESGLSV). The CTLH domain maps to 153–210 (PFVELNRILEALKVRVLRPALEWAVSNREMLIAQNSSLEFKLHRLYFISLLMGGTTNQ). The RING-Gid-type zinc-finger motif lies at 336 to 377 (CPILRQQTTDNNPPMKLVCGHIISRDALNKMFNGSKLKCPYC).

Identified in the CTLH complex that contains GID4, RANBP9 and/or RANBP10, MKLN1, MAEA, RMND5A (or alternatively its paralog RMND5B), GID8, ARMC8, WDR26 and YPEL5. Within this complex, MAEA, RMND5A (or alternatively its paralog RMND5B), GID8, WDR26, and RANBP9 and/or RANBP10 form the catalytic core, while GID4, MKLN1, ARMC8 and YPEL5 have ancillary roles.

Its subcellular location is the nucleus. It localises to the nucleoplasm. It is found in the cytoplasm. The catalysed reaction is S-ubiquitinyl-[E2 ubiquitin-conjugating enzyme]-L-cysteine + [acceptor protein]-L-lysine = [E2 ubiquitin-conjugating enzyme]-L-cysteine + N(6)-ubiquitinyl-[acceptor protein]-L-lysine.. Its function is as follows. Core component of the CTLH E3 ubiquitin-protein ligase complex that selectively accepts ubiquitin from UBE2H and mediates ubiquitination and subsequent proteasomal degradation of the transcription factor HBP1. MAEA and RMND5A are both required for catalytic activity of the CTLH E3 ubiquitin-protein ligase complex. Catalytic activity of the complex is required for normal cell proliferation. The CTLH E3 ubiquitin-protein ligase complex is not required for the degradation of enzymes involved in gluconeogenesis, such as FBP1. The protein is E3 ubiquitin-protein ligase RMND5A (Rmnd5a) of Mus musculus (Mouse).